The chain runs to 570 residues: Proline--tRNA ligase (570 aa).

The protein belongs to the class-II aminoacyl-tRNA synthetase family. ProS type 1 subfamily. Homodimer.

It is found in the cytoplasm. The enzyme catalyses tRNA(Pro) + L-proline + ATP = L-prolyl-tRNA(Pro) + AMP + diphosphate. In terms of biological role, catalyzes the attachment of proline to tRNA(Pro) in a two-step reaction: proline is first activated by ATP to form Pro-AMP and then transferred to the acceptor end of tRNA(Pro). As ProRS can inadvertently accommodate and process non-cognate amino acids such as alanine and cysteine, to avoid such errors it has two additional distinct editing activities against alanine. One activity is designated as 'pretransfer' editing and involves the tRNA(Pro)-independent hydrolysis of activated Ala-AMP. The other activity is designated 'posttransfer' editing and involves deacylation of mischarged Ala-tRNA(Pro). The misacylated Cys-tRNA(Pro) is not edited by ProRS. The sequence is that of Proline--tRNA ligase from Pelotomaculum thermopropionicum (strain DSM 13744 / JCM 10971 / SI).